The sequence spans 458 residues: Argininosuccinate lyase (458 aa).

It belongs to the lyase 1 family. Argininosuccinate lyase subfamily.

The protein localises to the cytoplasm. It catalyses the reaction 2-(N(omega)-L-arginino)succinate = fumarate + L-arginine. The protein operates within amino-acid biosynthesis; L-arginine biosynthesis; L-arginine from L-ornithine and carbamoyl phosphate: step 3/3. The protein is Argininosuccinate lyase of Bacillus velezensis (strain DSM 23117 / BGSC 10A6 / LMG 26770 / FZB42) (Bacillus amyloliquefaciens subsp. plantarum).